Reading from the N-terminus, the 299-residue chain is 5-azacytidine resistance protein azr1 (299 aa).

One can recognise a PPM-type phosphatase domain in the interval 35 to 293 (KSHFPSPATL…DDTTITCLLI (259 aa)).

In terms of biological role, confers azacytidine resistance in high copy. In Schizosaccharomyces pombe (strain 972 / ATCC 24843) (Fission yeast), this protein is 5-azacytidine resistance protein azr1 (azr1).